We begin with the raw amino-acid sequence, 351 residues long: Histidinol-phosphate aminotransferase (351 aa).

Lys221 carries the N6-(pyridoxal phosphate)lysine modification.

The protein belongs to the class-II pyridoxal-phosphate-dependent aminotransferase family. Histidinol-phosphate aminotransferase subfamily. In terms of assembly, homodimer. Requires pyridoxal 5'-phosphate as cofactor.

It catalyses the reaction L-histidinol phosphate + 2-oxoglutarate = 3-(imidazol-4-yl)-2-oxopropyl phosphate + L-glutamate. The protein operates within amino-acid biosynthesis; L-histidine biosynthesis; L-histidine from 5-phospho-alpha-D-ribose 1-diphosphate: step 7/9. The polypeptide is Histidinol-phosphate aminotransferase (Staphylococcus epidermidis (strain ATCC 12228 / FDA PCI 1200)).